The chain runs to 264 residues: MQGITELLPISSTAHMRIVPALLGWQDPGSAFSAAMQLAALAAVISYFWGDVRDLLFGSLDALTRRDFSDRHFRLASWIVLATIPIVIAGVALSGVLNACNSPLRSLTVIGWSCIAMAILLALAEIFARHKRTIAEASLADALLVGVAQIGALIPGVSRSGSTLTAALGLGFKRAEAARFSFLLGLPAIALAGLKELWELHKVHLDAHGWSVLATGLVVASISAFFAIWGLMRVLERFSAWPFVIYRGLLGVVLLLGLAMGWLA.

Transmembrane regions (helical) follow at residues 29-49, 77-97, 107-127, 137-157, 180-200, 212-232, and 243-263; these read GSAF…SYFW, SWIV…SGVL, LTVI…AEIF, ASLA…IPGV, FSFL…LWEL, VLAT…WGLM, and FVIY…MGWL.

It belongs to the UppP family.

The protein localises to the cell inner membrane. It catalyses the reaction di-trans,octa-cis-undecaprenyl diphosphate + H2O = di-trans,octa-cis-undecaprenyl phosphate + phosphate + H(+). Its function is as follows. Catalyzes the dephosphorylation of undecaprenyl diphosphate (UPP). Confers resistance to bacitracin. The chain is Undecaprenyl-diphosphatase 2 from Mesorhizobium japonicum (strain LMG 29417 / CECT 9101 / MAFF 303099) (Mesorhizobium loti (strain MAFF 303099)).